A 335-amino-acid polypeptide reads, in one-letter code: Acetyl-coenzyme A carboxylase carboxyl transferase subunit alpha (335 aa).

Positions 38–292 (TLEQKAEELR…ATALSEEIEN (255 aa)) constitute a CoA carboxyltransferase C-terminal domain.

The protein belongs to the AccA family. Acetyl-CoA carboxylase is a heterohexamer composed of biotin carboxyl carrier protein (AccB), biotin carboxylase (AccC) and two subunits each of ACCase subunit alpha (AccA) and ACCase subunit beta (AccD).

It is found in the cytoplasm. It carries out the reaction N(6)-carboxybiotinyl-L-lysyl-[protein] + acetyl-CoA = N(6)-biotinyl-L-lysyl-[protein] + malonyl-CoA. Its pathway is lipid metabolism; malonyl-CoA biosynthesis; malonyl-CoA from acetyl-CoA: step 1/1. In terms of biological role, component of the acetyl coenzyme A carboxylase (ACC) complex. First, biotin carboxylase catalyzes the carboxylation of biotin on its carrier protein (BCCP) and then the CO(2) group is transferred by the carboxyltransferase to acetyl-CoA to form malonyl-CoA. In Heliobacterium modesticaldum (strain ATCC 51547 / Ice1), this protein is Acetyl-coenzyme A carboxylase carboxyl transferase subunit alpha.